The sequence spans 66 residues: Large ribosomal subunit protein bL28 (66 aa).

Residues 1 to 26 (MAKDAITGARTRFGNQRSHALNSSRR) are disordered. Residues 13–25 (FGNQRSHALNSSR) show a composition bias toward polar residues.

Belongs to the bacterial ribosomal protein bL28 family.

The sequence is that of Large ribosomal subunit protein bL28 from Leuconostoc citreum (strain KM20).